We begin with the raw amino-acid sequence, 766 residues long: ATP-dependent RNA helicase mak5 (766 aa).

Disordered stretches follow at residues M1 to D28 and L75 to P173. Residues K78–K91 are compositionally biased toward basic residues. Residues E95–W106 show a composition bias toward acidic residues. Composition is skewed to basic and acidic residues over residues V114 to Q126 and A132 to I171. The Q motif signature appears at S192–K220. The Helicase ATP-binding domain maps to I223–D433. A236–T243 contributes to the ATP binding site. Positions D360–D363 match the DEAD box motif. The region spanning Y485–D635 is the Helicase C-terminal domain. The interval E683–K711 is disordered. A compositionally biased stretch (basic and acidic residues) spans G698–K711.

Belongs to the DEAD box helicase family. DDX24/MAK5 subfamily.

The protein localises to the nucleus. Its subcellular location is the nucleolus. It catalyses the reaction ATP + H2O = ADP + phosphate + H(+). In terms of biological role, ATP-binding RNA helicase involved in the biogenesis of 60S ribosomal subunits and is required for the normal formation of 25S and 5.8S rRNAs. The protein is ATP-dependent RNA helicase mak5 (mak5) of Aspergillus niger (strain ATCC MYA-4892 / CBS 513.88 / FGSC A1513).